We begin with the raw amino-acid sequence, 303 residues long: Polyisoprenyl-teichoic acid--peptidoglycan teichoic acid transferase TagU (303 aa).

The Cytoplasmic segment spans residues 1 to 4; sequence MKKK. The chain crosses the membrane as a helical; Signal-anchor for type II membrane protein span at residues 5-25; the sequence is ILFWVLGILGVLIIGGGIYAY. Over 26–303 the chain is Extracellular; sequence NVYSSVSNTL…KLRTHLEVTK (278 aa).

Belongs to the LytR/CpsA/Psr (LCP) family.

Its subcellular location is the cell membrane. The protein operates within cell wall biogenesis. Its function is as follows. May catalyze the final step in cell wall teichoic acid biosynthesis, the transfer of the anionic cell wall polymers (APs) from their lipid-linked precursor to the cell wall peptidoglycan (PG). In Bacillus cereus (strain ZK / E33L), this protein is Polyisoprenyl-teichoic acid--peptidoglycan teichoic acid transferase TagU.